The following is an 824-amino-acid chain: E3 ubiquitin-protein ligase TRIM71 (824 aa).

The RING-type zinc finger occupies cysteine 23–aspartate 93. The disordered stretch occupies residues serine 37 to serine 56. Residues leucine 147–leucine 194 form a B box-type 1; atypical zinc finger. Residues cysteine 152, cysteine 155, cysteine 176, histidine 180, cysteine 234, histidine 237, cysteine 257, and histidine 262 each coordinate Zn(2+). The B box-type 2 zinc finger occupies glutamate 229–leucine 270. A coiled-coil region spans residues glutamine 293–lysine 321. The stretch at serine 435 to valine 536 is one Filamin repeat. NHL repeat units follow at residues methionine 549–cysteine 592, histidine 596–aspartate 639, leucine 643–aspartate 686, leucine 690–aspartate 733, alanine 737–asparagine 780, and leucine 784–phenylalanine 824.

Belongs to the TRIM/RBCC family.

It is found in the cytoplasm. Its subcellular location is the P-body. The enzyme catalyses S-ubiquitinyl-[E2 ubiquitin-conjugating enzyme]-L-cysteine + [acceptor protein]-L-lysine = [E2 ubiquitin-conjugating enzyme]-L-cysteine + N(6)-ubiquitinyl-[acceptor protein]-L-lysine.. Its pathway is protein modification; protein ubiquitination. E3 ubiquitin-protein ligase that cooperates with the microRNAs (miRNAs) machinery and promotes embryonic stem cells proliferation and maintenance. Binds to miRNAs and participates in post-transcriptional repression of transcripts. Required to maintain proliferation and prevent premature differentiation of neural progenitor cells during early neural development. The chain is E3 ubiquitin-protein ligase TRIM71 (trim71) from Danio rerio (Zebrafish).